Consider the following 382-residue polypeptide: Anhydro-N-acetylmuramic acid kinase (382 aa).

9-16 contacts ATP; that stretch reads GTSLDGID.

It belongs to the anhydro-N-acetylmuramic acid kinase family.

It carries out the reaction 1,6-anhydro-N-acetyl-beta-muramate + ATP + H2O = N-acetyl-D-muramate 6-phosphate + ADP + H(+). Its pathway is amino-sugar metabolism; 1,6-anhydro-N-acetylmuramate degradation. It participates in cell wall biogenesis; peptidoglycan recycling. Functionally, catalyzes the specific phosphorylation of 1,6-anhydro-N-acetylmuramic acid (anhMurNAc) with the simultaneous cleavage of the 1,6-anhydro ring, generating MurNAc-6-P. Is required for the utilization of anhMurNAc either imported from the medium or derived from its own cell wall murein, and thus plays a role in cell wall recycling. The chain is Anhydro-N-acetylmuramic acid kinase from Bacillus cereus (strain ZK / E33L).